The sequence spans 29 residues: uncharacterized protein (29 aa).

Residues 8–28 (FALIVVLFILLIIVGTAFVGG) form a helical membrane-spanning segment.

The protein belongs to the SscA family.

The protein localises to the membrane. This is an uncharacterized protein from Bacillus subtilis (strain 168).